Consider the following 300-residue polypeptide: MGMDMIEMIEKAEILMEALPFIQKFYGKIFVIKYGGHAMIDEKAKNWTAQDVVLLKYVGINPVVVHGGGPEINKAMEKMGKKPEFVHGLRVTDEETLDIVEMVLAGKINGDIVSKLSKFGGKAVGLSGKSGRIILAKKKLKKIKTEKGEEIEVDLGRVGETVEVNTELLEILINNGYIPVVSPIGLDEKGEAYNLNADTVAGDIAGALKAEKLILITDVDGIMDDINNPETLHRKLTASELKEMIEDGRIKGGMIPKAESALYALEHGVKSVHIINGKIPHALLLEIFTEEGIGTMITRD.

Residues 68–69, Arg-90, and Asn-194 each bind substrate; that span reads GG.

Belongs to the acetylglutamate kinase family. ArgB subfamily.

The protein resides in the cytoplasm. The enzyme catalyses N-acetyl-L-glutamate + ATP = N-acetyl-L-glutamyl 5-phosphate + ADP. It participates in amino-acid biosynthesis; L-arginine biosynthesis; N(2)-acetyl-L-ornithine from L-glutamate: step 2/4. Its function is as follows. Catalyzes the ATP-dependent phosphorylation of N-acetyl-L-glutamate. The polypeptide is Acetylglutamate kinase (Methanocaldococcus jannaschii (strain ATCC 43067 / DSM 2661 / JAL-1 / JCM 10045 / NBRC 100440) (Methanococcus jannaschii)).